The following is a 381-amino-acid chain: Anhydro-N-acetylmuramic acid kinase (381 aa).

13-20 (GTSLDGID) is a binding site for ATP.

This sequence belongs to the anhydro-N-acetylmuramic acid kinase family.

The enzyme catalyses 1,6-anhydro-N-acetyl-beta-muramate + ATP + H2O = N-acetyl-D-muramate 6-phosphate + ADP + H(+). Its pathway is amino-sugar metabolism; 1,6-anhydro-N-acetylmuramate degradation. It participates in cell wall biogenesis; peptidoglycan recycling. Functionally, catalyzes the specific phosphorylation of 1,6-anhydro-N-acetylmuramic acid (anhMurNAc) with the simultaneous cleavage of the 1,6-anhydro ring, generating MurNAc-6-P. Is required for the utilization of anhMurNAc either imported from the medium or derived from its own cell wall murein, and thus plays a role in cell wall recycling. The polypeptide is Anhydro-N-acetylmuramic acid kinase (Francisella tularensis subsp. novicida (strain U112)).